Consider the following 326-residue polypeptide: N-acetyl-gamma-glutamyl-phosphate reductase (326 aa).

The active site involves C155.

It belongs to the NAGSA dehydrogenase family. Type 1 subfamily.

Its subcellular location is the cytoplasm. The catalysed reaction is N-acetyl-L-glutamate 5-semialdehyde + phosphate + NADP(+) = N-acetyl-L-glutamyl 5-phosphate + NADPH + H(+). It functions in the pathway amino-acid biosynthesis; L-arginine biosynthesis; N(2)-acetyl-L-ornithine from L-glutamate: step 3/4. Functionally, catalyzes the NADPH-dependent reduction of N-acetyl-5-glutamyl phosphate to yield N-acetyl-L-glutamate 5-semialdehyde. In Shewanella frigidimarina (strain NCIMB 400), this protein is N-acetyl-gamma-glutamyl-phosphate reductase.